A 1058-amino-acid chain; its full sequence is Isoleucine--tRNA ligase (1058 aa).

The short motif at 48–58 is the 'HIGH' region element; the sequence is PYTTGHIHLGT. The 'KMSKS' region motif lies at 596–600; it reads KMSKS. Lys-599 is a binding site for ATP.

Belongs to the class-I aminoacyl-tRNA synthetase family. IleS type 2 subfamily. In terms of assembly, monomer. It depends on Zn(2+) as a cofactor.

It is found in the cytoplasm. It catalyses the reaction tRNA(Ile) + L-isoleucine + ATP = L-isoleucyl-tRNA(Ile) + AMP + diphosphate. Its function is as follows. Catalyzes the attachment of isoleucine to tRNA(Ile). As IleRS can inadvertently accommodate and process structurally similar amino acids such as valine, to avoid such errors it has two additional distinct tRNA(Ile)-dependent editing activities. One activity is designated as 'pretransfer' editing and involves the hydrolysis of activated Val-AMP. The other activity is designated 'posttransfer' editing and involves deacylation of mischarged Val-tRNA(Ile). In Methanosarcina acetivorans (strain ATCC 35395 / DSM 2834 / JCM 12185 / C2A), this protein is Isoleucine--tRNA ligase.